A 457-amino-acid polypeptide reads, in one-letter code: Chromogranin-A (457 aa).

The signal sequence occupies residues 1-18; the sequence is MRSAAVLALLLCAGQVTA. A disulfide bond links Cys35 and Cys56. An O-glycosylated at one site only in cerebrospinal fluid region spans residues 41 to 59; the sequence is SDTLSKPSPMPVSQECFET. The interval 88-440 is disordered; that stretch reads KERAHQQKKH…DQELESLSAI (353 aa). Residues 116–144 show a composition bias toward basic and acidic residues; the sequence is ELKEAVEEPSSKDVMEKREDSKEAEKSGE. Ser142 is modified (phosphoserine). Residues 171–180 show a composition bias toward acidic residues; that stretch reads GEEEEEEEEA. O-linked (GalNAc...) threonine glycosylation is found at Thr181 and Thr183. An O-glycosylated at one site only in cerebrospinal fluid region spans residues 181 to 191; it reads TNTHPPASLPS. Residues 182 to 191 are compositionally biased toward polar residues; it reads NTHPPASLPS. Phosphotyrosine is present on Tyr194. Phosphoserine occurs at positions 203 and 218. Over residues 229-249 the composition is skewed to acidic residues; it reads EEEEEEEEAEAGEEAVPEEEG. Thr251 is a glycosylation site (O-linked (GalNAc...) threonine). 2 stretches are compositionally biased toward basic and acidic residues: residues 263 to 272 and 291 to 303; these read KEIRKGESRS and PEGKGEQEHSQQK. Phosphoserine occurs at positions 270 and 300. Residue Gly319 is modified to Glycine amide. Ser322, Ser333, and Ser371 each carry phosphoserine. Residues 330–360 are compositionally biased toward basic and acidic residues; the sequence is ERLSKEWEDSKRWSKMDQLAKELTAEKRLEG. At Met372 the chain carries Methionine sulfoxide. Phosphoserine occurs at positions 398, 402, 424, and 438. Basic and acidic residues predominate over residues 414–431; it reads YPEEKKEEEGSANRRPED. An O-linked (Xyl...) (chondroitin sulfate) serine glycan is attached at Ser424. Position 456 is an arginine amide (Arg456).

Belongs to the chromogranin/secretogranin protein family. Self-interacts; self-assembly is promoted in vitro by chondroitin sulfate attachment which occurs at mildly acidic pH conditions. Interacts with SCG3. Interacts with ITPR1 in the secretory granules. Post-translationally, sulfated on tyrosine residues and/or contains sulfated glycans. O-glycosylated with core 1 or possibly core 8 glycans. Contains chondroitin sulfate (CS); CS attachment is pH-dependent, being observed at mildly acidic conditions of pH 5 but not at neutral pH, and promotes self-assembly in vitro. In terms of processing, proteolytic processing gives rise to an additional longer form of catestatin (residues 358-390) which displays a less potent catecholamine release-inhibitory activity. Plasmin-mediated proteolytic processing can give rise to additional shorter and longer forms of catestatin peptides. Detected in cerebrospinal fluid (at protein level). Detected in urine (at protein level). As to expression, found in the brain.

It is found in the secreted. It localises to the cytoplasmic vesicle. The protein localises to the secretory vesicle. The protein resides in the neuronal dense core vesicle. In terms of biological role, strongly inhibits glucose induced insulin release from the pancreas. Functionally, inhibits catecholamine release from chromaffin cells and noradrenergic neurons by acting as a non-competitive nicotinic cholinergic antagonist. Displays antibacterial activity against Gram-positive bacteria S.aureus and M.luteus, and Gram-negative bacteria E.coli and P.aeruginosa. Can induce mast cell migration, degranulation and production of cytokines and chemokines. Acts as a potent scavenger of free radicals in vitro. May play a role in the regulation of cardiac function and blood pressure. Regulates granule biogenesis in endocrine cells by up-regulating the transcription of protease nexin 1 (SERPINE2) via a cAMP-PKA-SP1 pathway. This leads to inhibition of granule protein degradation in the Golgi complex which in turn promotes granule formation. This chain is Chromogranin-A (CHGA), found in Homo sapiens (Human).